The chain runs to 401 residues: Chalcone synthase 4 (401 aa).

Residue cysteine 168 is part of the active site.

It belongs to the thiolase-like superfamily. Chalcone/stilbene synthases family.

It catalyses the reaction (E)-4-coumaroyl-CoA + 3 malonyl-CoA + 3 H(+) = 2',4,4',6'-tetrahydroxychalcone + 3 CO2 + 4 CoA. It functions in the pathway secondary metabolite biosynthesis; flavonoid biosynthesis. Functionally, the primary product of this enzyme is 4,2',4',6'-tetrahydroxychalcone (also termed naringenin-chalcone or chalcone) which can under specific conditions spontaneously isomerize into naringenin. The polypeptide is Chalcone synthase 4 (CHS4) (Sorghum bicolor (Sorghum)).